We begin with the raw amino-acid sequence, 358 residues long: Presenilin hop-1 (358 aa).

Over 1 to 12 (MPRTKRVYSGKT) the chain is Cytoplasmic. A helical membrane pass occupies residues 13–33 (ITGVLYPVAICMLFVAINVKL). Residues 34-57 (SQPEQQEQSKVVYGLFHSYDTADS) are Lumenal-facing. The chain crosses the membrane as a helical span at residues 58-78 (GTITLYLIGFLILTTSLGVFC). Topologically, residues 79–86 (YQMKFYKA) are cytoplasmic. The helical transmembrane segment at 87–107 (IKVYVLANSIGILLVYSVFHF) threads the bilayer. The Lumenal segment spans residues 108 to 115 (QRIAEAQS). The chain crosses the membrane as a helical span at residues 116–136 (IPVSVPTFFFLILQFGGLGIT). The Cytoplasmic segment spans residues 137-148 (CLHWKSHRRLHQ). Residues 149–169 (FYLIMLAGLTAIFILNILPDW) form a helical membrane-spanning segment. A topological domain (lumenal) is located at residue T170. A helical transmembrane segment spans residues 171-191 (VWMALTAISFWDIVAVLTPCG). Residue D182 is part of the active site. At 192–273 (PLKMLVETAN…EVREVEGTIR (82 aa)) the chain is on the cytoplasmic side. The segment covering 221–240 (EVDSPDTTRSNSTPLTEFNN) has biased composition (polar residues). Residues 221 to 242 (EVDSPDTTRSNSTPLTEFNNSS) form a disordered region. The helical transmembrane segment at 274 to 294 (LGMGDFVFYSLMLGNTVQTCP) threads the bilayer. The active site involves D278. Topologically, residues 295 to 297 (LPT) are lumenal. A helical transmembrane segment spans residues 298–318 (VVACFVSNLVGLTITLPIVTL). Topologically, residues 319 to 321 (SQT) are cytoplasmic. The helical intramembrane region spans 322–342 (ALPALPFPLAIAAIFYFSSHI). The PAL motif lies at 324–326 (PAL). Topologically, residues 343-358 (ALTPFTDLCTSQLILI) are cytoplasmic.

It belongs to the peptidase A22A family. Homodimer. Component of the gamma-secretase complex, a complex probably composed of the presenilin homodimer (sel-12, hop-1 or spe-4), nicastrin (aph-2), aph-1 and pen-2. As to expression, weakly expressed.

The protein localises to the endoplasmic reticulum membrane. It is found in the golgi apparatus membrane. In terms of biological role, probable catalytic subunit of the gamma-secretase complex, an endoprotease complex that catalyzes the intramembrane cleavage of integral membrane proteins such as Notch receptors (lin-12 or glp-1). Probably works redundantly of lin-12, which provides more presenilin function. This is Presenilin hop-1 (hop-1) from Caenorhabditis elegans.